We begin with the raw amino-acid sequence, 338 residues long: MLTERQLLILQTIVDDFIGSAQPVGSRTLAKKDEITFSPATIRNEMADLEELGFIEKTHSSSGRVPSEKGYRFYVDHLLAPQNLPTDEIVQIKDLFAERIFEAEKIAQQSAQILSELTNYTAIVLGPKLSTNKLKNVQIVPLDRQTAVAIIVTDTGHVQSKTITVPESVDLSDLEKMVNILNEKLSGIPMAELHNKIFKEIVTVLRGYVHNYDSAIKMLDGTFQVPLSEKIYFGGKANMLSQPEFHDIHKVRSLLTMIDNEAAFYDILRHKQVGIQVKIGRENSSTAMEDCSLISATYSIGEEQLGTIAILGPTRMQYSRVISLLQLFTRQFTDGLKK.

The protein belongs to the HrcA family.

Negative regulator of class I heat shock genes (grpE-dnaK-dnaJ and groELS operons). Prevents heat-shock induction of these operons. This is Heat-inducible transcription repressor HrcA from Bacillus mycoides (strain KBAB4) (Bacillus weihenstephanensis).